A 371-amino-acid polypeptide reads, in one-letter code: Tetraacyldisaccharide 4'-kinase (371 aa).

48–55 (SAGGTGKT) provides a ligand contact to ATP.

It belongs to the LpxK family.

It catalyses the reaction a lipid A disaccharide + ATP = a lipid IVA + ADP + H(+). Its pathway is glycolipid biosynthesis; lipid IV(A) biosynthesis; lipid IV(A) from (3R)-3-hydroxytetradecanoyl-[acyl-carrier-protein] and UDP-N-acetyl-alpha-D-glucosamine: step 6/6. Transfers the gamma-phosphate of ATP to the 4'-position of a tetraacyldisaccharide 1-phosphate intermediate (termed DS-1-P) to form tetraacyldisaccharide 1,4'-bis-phosphate (lipid IVA). In Chlorobium chlorochromatii (strain CaD3), this protein is Tetraacyldisaccharide 4'-kinase.